The chain runs to 665 residues: Probable potassium transport system protein Kup 2 (665 aa).

The next 13 helical transmembrane spans lie at 13-33 (GLLVSIGIVYGDIGTSPLYVM), 55-75 (ISLILWTITLLTTVKYVLIAL), 98-118 (WLVLPALIGGAALLADGTLTP), 138-158 (IPVPNQNSVLIITIIILLFLF), 167-187 (IIGKTFGPIMLIWFTFLGLTG), 195-215 (LSLLEALNPVLAVKILFSPAN), 217-237 (VGVLILGAVFLATTGAEALYS), 250-270 (SWPYVFICLALNYLGQGVWIL), 295-315 (FFAIILATLAAIIASQALITG), 344-364 (IFIPSINKMLCAATIGIVFLF), 375-395 (GLAITVTMLMTTILLFEYLSL), 400-420 (ILLRLVFLFLFGAIESMFLIS), and 428-448 (GGYVTVIIAAFIGAIMYIWYF).

Belongs to the HAK/KUP transporter (TC 2.A.72) family.

The protein localises to the cell membrane. It carries out the reaction K(+)(in) + H(+)(in) = K(+)(out) + H(+)(out). Its function is as follows. Transport of potassium into the cell. Likely operates as a K(+):H(+) symporter. The protein is Probable potassium transport system protein Kup 2 of Lactobacillus johnsonii (strain CNCM I-12250 / La1 / NCC 533).